The sequence spans 110 residues: Phosphoribosyl-AMP cyclohydrolase (110 aa).

Mg(2+) is bound at residue D74. C75 provides a ligand contact to Zn(2+). Positions 76 and 78 each coordinate Mg(2+). Residues C91 and C98 each contribute to the Zn(2+) site.

The protein belongs to the PRA-CH family. As to quaternary structure, homodimer. Mg(2+) is required as a cofactor. Zn(2+) serves as cofactor.

It localises to the cytoplasm. It catalyses the reaction 1-(5-phospho-beta-D-ribosyl)-5'-AMP + H2O = 1-(5-phospho-beta-D-ribosyl)-5-[(5-phospho-beta-D-ribosylamino)methylideneamino]imidazole-4-carboxamide. The protein operates within amino-acid biosynthesis; L-histidine biosynthesis; L-histidine from 5-phospho-alpha-D-ribose 1-diphosphate: step 3/9. In terms of biological role, catalyzes the hydrolysis of the adenine ring of phosphoribosyl-AMP. This chain is Phosphoribosyl-AMP cyclohydrolase, found in Lacticaseibacillus paracasei (strain ATCC 334 / BCRC 17002 / CCUG 31169 / CIP 107868 / KCTC 3260 / NRRL B-441) (Lactobacillus paracasei).